Consider the following 432-residue polypeptide: Glutamate-1-semialdehyde 2,1-aminomutase (432 aa).

Lysine 272 carries the post-translational modification N6-(pyridoxal phosphate)lysine.

The protein belongs to the class-III pyridoxal-phosphate-dependent aminotransferase family. HemL subfamily. Homodimer. Pyridoxal 5'-phosphate serves as cofactor.

It is found in the cytoplasm. The enzyme catalyses (S)-4-amino-5-oxopentanoate = 5-aminolevulinate. The protein operates within porphyrin-containing compound metabolism; protoporphyrin-IX biosynthesis; 5-aminolevulinate from L-glutamyl-tRNA(Glu): step 2/2. It participates in porphyrin-containing compound metabolism; chlorophyll biosynthesis. The protein is Glutamate-1-semialdehyde 2,1-aminomutase of Nostoc punctiforme (strain ATCC 29133 / PCC 73102).